The primary structure comprises 349 residues: Twinfilin-2 (349 aa).

Position 2 is an N-acetylalanine (Ala2). 2 consecutive ADF-H domains span residues 4-139 (QTGI…KHLS) and 177-313 (GLAF…DEVH). Lys14 bears the N6-acetyllysine mark. Tyr309 is modified (phosphotyrosine). Residues 322–349 (AFAKPKGPGGKRGHKRLIRGPGENGEDS) are disordered. Basic residues predominate over residues 330–339 (GGKRGHKRLI). Position 349 is a phosphoserine (Ser349).

This sequence belongs to the actin-binding proteins ADF family. Twinfilin subfamily. In terms of assembly, interacts with G-actin; ADP-actin form and capping protein (CP). Isoform 2 interacts (via its N-terminal ADF-H domain) with G-actin (ADP-bound form) with significantly higher affinity than isoform 1. May also be able to interact with TWF1 and phosphoinositides, PI(4,5)P2. When bound to PI(4,5)P2, it is down-regulated. Interacts with MYO7A. Phosphorylated on both serine/threonine and tyrosine. Isoform 1 is ubiquitously expressed (at protein level). Isoform 2 expression is restricted to heart and skeletal muscle where it is the predominant form.

Its subcellular location is the cytoplasm. It localises to the cytoskeleton. It is found in the perinuclear region. The protein resides in the cell projection. The protein localises to the stereocilium. Its function is as follows. Actin-binding protein involved in motile and morphological processes. Inhibits actin polymerization, likely by sequestering G-actin. By capping the barbed ends of filaments, it also regulates motility. Seems to play an important role in clathrin-mediated endocytosis and distribution of endocytic organelles. May play a role in regulating the mature length of the middle and short rows of stereocilia. The polypeptide is Twinfilin-2 (Twf2) (Mus musculus (Mouse)).